The chain runs to 547 residues: Glucose-6-phosphate isomerase (547 aa).

Catalysis depends on Glu350, which acts as the Proton donor. Active-site residues include His381 and Lys510.

This sequence belongs to the GPI family.

The protein localises to the cytoplasm. The catalysed reaction is alpha-D-glucose 6-phosphate = beta-D-fructose 6-phosphate. Its pathway is carbohydrate biosynthesis; gluconeogenesis. It functions in the pathway carbohydrate degradation; glycolysis; D-glyceraldehyde 3-phosphate and glycerone phosphate from D-glucose: step 2/4. Functionally, catalyzes the reversible isomerization of glucose-6-phosphate to fructose-6-phosphate. The sequence is that of Glucose-6-phosphate isomerase from Mesorhizobium japonicum (strain LMG 29417 / CECT 9101 / MAFF 303099) (Mesorhizobium loti (strain MAFF 303099)).